Reading from the N-terminus, the 81-residue chain is Dermaseptin-B2 (81 aa).

The signal sequence occupies residues 1-22 (MAFLKKSLFLVLFLGLVSLSIC). Positions 23-43 (EEEKRENEDEEEQEDDEQSEM) are excised as a propeptide. Positions 24 to 46 (EEKRENEDEEEQEDDEQSEMKRG) are disordered. The segment covering 30-40 (EDEEEQEDDEQ) has biased composition (acidic residues). A hinge region that separates the two alpha-helices that constitute the peptide region spans residues 54-55 (VG). A Valine amide modification is found at valine 78. The propeptide occupies 80 to 81 (EQ).

In terms of processing, amidation permits an increased antimicrobial activity against some microorganisms such as T.album and S.cerevisiae. Post-translationally, may contain a D-amino acid residue, since the natural peptide is not identical in chromatographic properties to the synthetic peptide. Expressed by the skin glands.

The protein localises to the secreted. It localises to the target cell membrane. In terms of biological role, cationic amphipathic alpha-helical antimicrobial peptide with potent activity against Gram-negative and Gram-positive bacteria, fungi and protozoa. Acts in a synergistic effect in combination with Plasticin-B1 at doses that are not active alone. Acts by disturbing membrane functions. On model membranes, induces a strong perturbation of anionic lipid bilayers, resides at the hydrocarbon core-water interface, parallel to the plane of the membrane, and interacts preferentially with the polar head groups and glycerol backbone region of the anionic phospholipids, as well as the region of the lipid acyl chain near the bilayer surface. Induces a positive curvature of the bilayer and clustering of anionic lipids, consistent with a carpet mechanism, that may lead to the formation of mixed peptide-phospholipid toroidal, transient pores and membrane permeation/disruption once a threshold peptide accumulation is reached. Also enhances binding of agonists to adenosine A1 receptors (ADORA1), adenosine A2a receptors (ADORA2A), alpha-2 adrenergic receptors (ADRA2A) and 5-hydroxytryptamine 1A receptors (HTR1A). In addition, it enhances guanyl nucleotide exchange which may result in the conversion of receptors to a high affinity state complexed with guanyl nucleotide free G-protein. Affects human behavior eliciting profound malaise, followed by listlessness and then euphoria. Does not show cytotoxic activity on CHO cells. Does not act as a chemoattractant. Does not show hemolytic activity. The chain is Dermaseptin-B2 (ADR) from Phyllomedusa bicolor (Two-colored leaf frog).